The following is a 446-amino-acid chain: N-succinylarginine dihydrolase (446 aa).

Substrate-binding positions include 19–28 (AGLSFGNVAS), N110, and 137–138 (HR). Residue E174 is part of the active site. R213 contributes to the substrate binding site. The active site involves H249. Substrate contacts are provided by D251 and N364. C370 acts as the Nucleophile in catalysis.

Belongs to the succinylarginine dihydrolase family. Homodimer.

The catalysed reaction is N(2)-succinyl-L-arginine + 2 H2O + 2 H(+) = N(2)-succinyl-L-ornithine + 2 NH4(+) + CO2. It participates in amino-acid degradation; L-arginine degradation via AST pathway; L-glutamate and succinate from L-arginine: step 2/5. Functionally, catalyzes the hydrolysis of N(2)-succinylarginine into N(2)-succinylornithine, ammonia and CO(2). This chain is N-succinylarginine dihydrolase, found in Burkholderia pseudomallei (strain 668).